A 964-amino-acid polypeptide reads, in one-letter code: Adhesion defective protein 3 (964 aa).

A disordered region spans residues 1-32 (MADFMDIEPSSHSAKASQYESSAPASSSLGNS). Low complexity predominate over residues 16 to 32 (ASQYESSAPASSSLGNS). In terms of domain architecture, LisH spans 34 to 66 (PNESLDYYIYDYFVKHNFEEAAQAFLRESKIQI). Over residues 69–83 (SSSSTAFSPSNNNAP) the composition is skewed to low complexity. Disordered stretches follow at residues 69 to 125 (SSSS…EETN), 241 to 273 (PKGT…PASA), 476 to 523 (VSMK…TSRM), 572 to 596 (QTLS…MSMD), and 664 to 914 (APMI…KPIS). Polar residues-rich tracts occupy residues 93 to 103 (LASPSKISESI), 261 to 270 (AMQNPHNSFP), and 508 to 523 (TQAN…TSRM). A compositionally biased stretch (low complexity) spans 575 to 589 (SSGNQPPQQSGPNPN). Composition is skewed to polar residues over residues 664-700 (APMI…TNRN), 707-716 (SPHQQFSPSA), 724-752 (RSMS…QNKE), 767-801 (AFPQ…SSLH), 818-828 (TIRTTERSTFS), and 857-868 (GGTNSISQDTTQ). The span at 869 to 885 (SLQMQSNSVNSSSMVDA) shows a compositional bias: low complexity. The span at 894 to 905 (GDTSALDSNAKN) shows a compositional bias: polar residues.

It belongs to the FLO8 family.

The protein localises to the cytoplasm. It localises to the nucleus. Its function is as follows. Probable transcriptional regulator involved in cell adhesion. The polypeptide is Adhesion defective protein 3 (adn3) (Schizosaccharomyces pombe (strain 972 / ATCC 24843) (Fission yeast)).